We begin with the raw amino-acid sequence, 151 residues long: Large ribosomal subunit protein uL15 (151 aa).

Positions 1–14 (MRREKKSRAYRGSR) are enriched in basic residues. A disordered region spans residues 1–33 (MRREKKSRAYRGSRTHGWGRVGQHRKSGSRGGR).

This sequence belongs to the universal ribosomal protein uL15 family. As to quaternary structure, part of the 50S ribosomal subunit.

In terms of biological role, binds to the 23S rRNA. The protein is Large ribosomal subunit protein uL15 of Thermofilum pendens (strain DSM 2475 / Hrk 5).